A 201-amino-acid chain; its full sequence is Recombination protein RecR (201 aa).

The segment at 60 to 75 adopts a C4-type zinc-finger fold; it reads CSCCGNVDTSDPCTIC. Positions 83–178 constitute a Toprim domain; it reads TTLIVVEDVS…RVTRLAHGVP (96 aa).

It belongs to the RecR family.

Functionally, may play a role in DNA repair. It seems to be involved in an RecBC-independent recombinational process of DNA repair. It may act with RecF and RecO. This is Recombination protein RecR from Brucella anthropi (strain ATCC 49188 / DSM 6882 / CCUG 24695 / JCM 21032 / LMG 3331 / NBRC 15819 / NCTC 12168 / Alc 37) (Ochrobactrum anthropi).